Consider the following 617-residue polypeptide: Protein fem-1 homolog C (617 aa).

7 ANK repeats span residues 2 to 31, 40 to 70, 82 to 111, 115 to 144, 148 to 177, 181 to 210, and 213 to 242; these read DLKTAVFNAARDGKLRLLSKLLENKAKDDV, NGATPLLMAARYGHLDMVDYLLDQCSASVEI, EGAPPLWAASAAGHLKVVRSLLVHGASVNN, TNSTPLRAACFDGHLEIVKYLVEHKADLEV, HGHTCLMISCYKGHKEIAQFLLEKGADVNR, KGNTALHDCAESGSLEIMQMLLKYGARMEK, and YGMTPLLSASVTGHTNIVDFLTQNPQTSKN. TPR repeat units follow at residues 245–279 and 338–371; these read INALELLGATFVDKKRDLLGALKYWKRAMDMRHSD and SYYIRYRGAVYADSGNFKRCINLWKYALDMQQNN. ANK repeat units lie at residues 481–523 and 527–556; these read NNFS…DVNV and EQNSPLHVAALNNHPDIMNLLVKSGAHFDS.

Belongs to the fem-1 family. Component of a CRL2 E3 ubiquitin-protein ligase complex, also named ECS (Elongin BC-CUL2/5-SOCS-box protein) complex.

The protein operates within protein modification; protein ubiquitination. Its function is as follows. Substrate-recognition component of a Cul2-RING (CRL2) E3 ubiquitin-protein ligase complex of the DesCEND (destruction via C-end degrons) pathway, which recognizes a C-degron located at the extreme C terminus of target proteins, leading to their ubiquitination and degradation. The C-degron recognized by the DesCEND pathway is usually a motif of less than ten residues and can be present in full-length proteins, truncated proteins or proteolytically cleaved forms. The CRL2(FEM1C) complex specifically recognizes proteins with an arginine at the C-terminus: recognizes and binds proteins ending with -Lys/Arg-Xaa-Arg and -Lys/Arg-Xaa-Xaa-Arg C-degrons, leading to their ubiquitination and degradation. This is Protein fem-1 homolog C from Xenopus laevis (African clawed frog).